Here is a 793-residue protein sequence, read N- to C-terminus: Phenylalanine--tRNA ligase beta subunit (793 aa).

One can recognise a tRNA-binding domain in the interval 40–159 (SKLNTKLVIG…MDEMVGREIS (120 aa)). The B5 domain maps to 401–476 (NYDNVYSITL…RLYGYDNIIE (76 aa)). Mg(2+) contacts are provided by Asp454, Asp460, Glu463, and Glu464. The region spanning 701 to 793 (SKFQKSTRDI…NLKELKVKVR (93 aa)) is the FDX-ACB domain.

This sequence belongs to the phenylalanyl-tRNA synthetase beta subunit family. Type 1 subfamily. Tetramer of two alpha and two beta subunits. Requires Mg(2+) as cofactor.

It localises to the cytoplasm. The catalysed reaction is tRNA(Phe) + L-phenylalanine + ATP = L-phenylalanyl-tRNA(Phe) + AMP + diphosphate + H(+). The polypeptide is Phenylalanine--tRNA ligase beta subunit (Mesoplasma florum (strain ATCC 33453 / NBRC 100688 / NCTC 11704 / L1) (Acholeplasma florum)).